Consider the following 257-residue polypeptide: Imidazole glycerol phosphate synthase subunit HisF (257 aa).

Catalysis depends on residues D11 and D130.

This sequence belongs to the HisA/HisF family. In terms of assembly, heterodimer of HisH and HisF.

It localises to the cytoplasm. The enzyme catalyses 5-[(5-phospho-1-deoxy-D-ribulos-1-ylimino)methylamino]-1-(5-phospho-beta-D-ribosyl)imidazole-4-carboxamide + L-glutamine = D-erythro-1-(imidazol-4-yl)glycerol 3-phosphate + 5-amino-1-(5-phospho-beta-D-ribosyl)imidazole-4-carboxamide + L-glutamate + H(+). Its pathway is amino-acid biosynthesis; L-histidine biosynthesis; L-histidine from 5-phospho-alpha-D-ribose 1-diphosphate: step 5/9. Functionally, IGPS catalyzes the conversion of PRFAR and glutamine to IGP, AICAR and glutamate. The HisF subunit catalyzes the cyclization activity that produces IGP and AICAR from PRFAR using the ammonia provided by the HisH subunit. In Vibrio parahaemolyticus serotype O3:K6 (strain RIMD 2210633), this protein is Imidazole glycerol phosphate synthase subunit HisF.